Reading from the N-terminus, the 92-residue chain is Small ribosomal subunit protein uS19c (92 aa).

This sequence belongs to the universal ribosomal protein uS19 family.

The protein resides in the plastid. The protein localises to the chloroplast. Its function is as follows. Protein S19 forms a complex with S13 that binds strongly to the 16S ribosomal RNA. The chain is Small ribosomal subunit protein uS19c from Thalassiosira pseudonana (Marine diatom).